Reading from the N-terminus, the 242-residue chain is Ubiquinone biosynthesis O-methyltransferase (242 aa).

S-adenosyl-L-methionine is bound by residues R44, G64, D85, and M129.

The protein belongs to the methyltransferase superfamily. UbiG/COQ3 family.

The catalysed reaction is a 3-demethylubiquinol + S-adenosyl-L-methionine = a ubiquinol + S-adenosyl-L-homocysteine + H(+). The enzyme catalyses a 3-(all-trans-polyprenyl)benzene-1,2-diol + S-adenosyl-L-methionine = a 2-methoxy-6-(all-trans-polyprenyl)phenol + S-adenosyl-L-homocysteine + H(+). Its pathway is cofactor biosynthesis; ubiquinone biosynthesis. In terms of biological role, O-methyltransferase that catalyzes the 2 O-methylation steps in the ubiquinone biosynthetic pathway. The polypeptide is Ubiquinone biosynthesis O-methyltransferase (Salmonella agona (strain SL483)).